The chain runs to 320 residues: tRNA (guanosine(34)-2'-O)-methyltransferase (320 aa).

Residues glycine 53, tryptophan 55, aspartate 81, aspartate 97, and aspartate 122 each coordinate S-adenosyl-L-methionine. Lysine 162 acts as the Proton acceptor in catalysis.

The protein belongs to the class I-like SAM-binding methyltransferase superfamily. RNA methyltransferase RlmE family. TRM7 subfamily. As to quaternary structure, interacts with CG33172/WDR6.

Its subcellular location is the cytoplasm. The catalysed reaction is cytidine(32)/guanosine(34) in tRNA + 2 S-adenosyl-L-methionine = 2'-O-methylcytidine(32)/2'-O-methylguanosine(34) in tRNA + 2 S-adenosyl-L-homocysteine + 2 H(+). Functionally, methylates the 2'-O-ribose of nucleotides at position 34 of the tRNA anticodon loop of substrate tRNAs. May require WDR6 for methylation of the nucleotide at position 34 of the anticodon loop of substrate tRNAs. Plays a role in neurogenesis. Requisite for RNA-mediated gene silencing. Modifies position 34 in tRNA(Leu(CAA)), tRNA(Leu(CAG)), tRNA(Phe(GAA)), and tRNA(Trp(CCA)). The sequence is that of tRNA (guanosine(34)-2'-O)-methyltransferase from Drosophila melanogaster (Fruit fly).